The following is a 1393-amino-acid chain: DNA-directed RNA polymerase subunit beta' (1393 aa).

Residues cysteine 72, cysteine 74, cysteine 87, and cysteine 90 each coordinate Zn(2+). Residues aspartate 463, aspartate 465, and aspartate 467 each coordinate Mg(2+). Positions 812, 887, 894, and 897 each coordinate Zn(2+).

The protein belongs to the RNA polymerase beta' chain family. As to quaternary structure, the RNAP catalytic core consists of 2 alpha, 1 beta, 1 beta' and 1 omega subunit. When a sigma factor is associated with the core the holoenzyme is formed, which can initiate transcription. The cofactor is Mg(2+). It depends on Zn(2+) as a cofactor.

The enzyme catalyses RNA(n) + a ribonucleoside 5'-triphosphate = RNA(n+1) + diphosphate. DNA-dependent RNA polymerase catalyzes the transcription of DNA into RNA using the four ribonucleoside triphosphates as substrates. This Chlamydia caviae (strain ATCC VR-813 / DSM 19441 / 03DC25 / GPIC) (Chlamydophila caviae) protein is DNA-directed RNA polymerase subunit beta'.